Here is a 163-residue protein sequence, read N- to C-terminus: Large ribosomal subunit protein uL10 (163 aa).

It belongs to the universal ribosomal protein uL10 family. Part of the ribosomal stalk of the 50S ribosomal subunit. The N-terminus interacts with L11 and the large rRNA to form the base of the stalk. The C-terminus forms an elongated spine to which L12 dimers bind in a sequential fashion forming a multimeric L10(L12)X complex.

Functionally, forms part of the ribosomal stalk, playing a central role in the interaction of the ribosome with GTP-bound translation factors. The sequence is that of Large ribosomal subunit protein uL10 (rplJ) from Haemophilus influenzae (strain ATCC 51907 / DSM 11121 / KW20 / Rd).